The following is an 84-amino-acid chain: Acyl carrier protein (84 aa).

Residues 1–75 enclose the Carrier domain; the sequence is MIFQKIQEFI…DILEYIQQHV (75 aa). At S35 the chain carries O-(pantetheine 4'-phosphoryl)serine.

It belongs to the acyl carrier protein (ACP) family. In terms of processing, 4'-phosphopantetheine is transferred from CoA to a specific serine of apo-ACP by AcpS. This modification is essential for activity because fatty acids are bound in thioester linkage to the sulfhydryl of the prosthetic group.

It localises to the cytoplasm. The protein operates within lipid metabolism; fatty acid biosynthesis. Functionally, carrier of the growing fatty acid chain in fatty acid biosynthesis. The polypeptide is Acyl carrier protein (Phytoplasma mali (strain AT)).